Here is a 203-residue protein sequence, read N- to C-terminus: MVSVGKKAPDFEMAGFYKGEFKTFRLSEYLGKWVVLCFYPGDFTFVUATEVSAVAEKYPEFQKLGVEVLSVSVDSVFVHKMWNDNELSKMVEGGIPFPMLSDGGGNVGTLYGVYDPEAGVENRGRFLIDPDGIIQGYEVLILPVGRNVSETLRQIQAFQLVRETKGAEVAPSGWKPGKKTLKPGPGLVGNVYKEWSVKEAFED.

Positions 2 to 160 constitute a Thioredoxin domain; that stretch reads VSVGKKAPDF…TLRQIQAFQL (159 aa). Residue Sec47 is part of the active site. A non-standard amino acid (selenocysteine) is located at residue Sec47.

This sequence belongs to the peroxiredoxin family. AhpC/Prx1 subfamily.

The enzyme catalyses a hydroperoxide + [thioredoxin]-dithiol = an alcohol + [thioredoxin]-disulfide + H2O. In terms of biological role, thiol-specific peroxidase that catalyzes the reduction of hydrogen peroxide and organic hydroperoxides to water and alcohols, respectively. Plays a role in cell protection against oxidative stress by detoxifying peroxides. This is Selenocysteine-containing peroxiredoxin PrxU from Peptoclostridium acidaminophilum (Eubacterium acidaminophilum).